Consider the following 165-residue polypeptide: Crossover junction endodeoxyribonuclease RuvC (165 aa).

Active-site residues include Asp6, Glu67, and Asp142. Mg(2+)-binding residues include Asp6, Glu67, and Asp142.

This sequence belongs to the RuvC family. In terms of assembly, homodimer which binds Holliday junction (HJ) DNA. The HJ becomes 2-fold symmetrical on binding to RuvC with unstacked arms; it has a different conformation from HJ DNA in complex with RuvA. In the full resolvosome a probable DNA-RuvA(4)-RuvB(12)-RuvC(2) complex forms which resolves the HJ. Mg(2+) is required as a cofactor.

It localises to the cytoplasm. The enzyme catalyses Endonucleolytic cleavage at a junction such as a reciprocal single-stranded crossover between two homologous DNA duplexes (Holliday junction).. In terms of biological role, the RuvA-RuvB-RuvC complex processes Holliday junction (HJ) DNA during genetic recombination and DNA repair. Endonuclease that resolves HJ intermediates. Cleaves cruciform DNA by making single-stranded nicks across the HJ at symmetrical positions within the homologous arms, yielding a 5'-phosphate and a 3'-hydroxyl group; requires a central core of homology in the junction. The consensus cleavage sequence is 5'-(A/T)TT(C/G)-3'. Cleavage occurs on the 3'-side of the TT dinucleotide at the point of strand exchange. HJ branch migration catalyzed by RuvA-RuvB allows RuvC to scan DNA until it finds its consensus sequence, where it cleaves and resolves the cruciform DNA. The chain is Crossover junction endodeoxyribonuclease RuvC from Chlamydia abortus (strain DSM 27085 / S26/3) (Chlamydophila abortus).